The chain runs to 335 residues: Fructose-1,6-bisphosphatase class 1 (335 aa).

4 residues coordinate Mg(2+): glutamate 89, aspartate 112, leucine 114, and aspartate 115. Substrate-binding positions include 115–118 (DGSS), asparagine 208, tyrosine 241, and lysine 271. Residue glutamate 277 coordinates Mg(2+).

Belongs to the FBPase class 1 family. As to quaternary structure, homotetramer. The cofactor is Mg(2+).

It localises to the cytoplasm. It catalyses the reaction beta-D-fructose 1,6-bisphosphate + H2O = beta-D-fructose 6-phosphate + phosphate. It participates in carbohydrate biosynthesis; gluconeogenesis. The protein is Fructose-1,6-bisphosphatase class 1 of Proteus mirabilis (strain HI4320).